The primary structure comprises 445 residues: MKKLYIRTFGCQMNEYDSDKMADVLGASEELVKTDNPEEADVILFNTCSVREKAQERVFHDLGRVKHLKQSNPNLIIGVGGCVASQEGDAIVARAPYVDVVFGPQTLHRLPQLIAERRHSGRSQVDISFPEIEKFDNMPPARVEGASAFVSIMEGCSKYCTFCVVPYTRGEEVSRPLDDVLAEVAGLAGQGVREVTLLGQNVNAWRGEITRDGGEQGDFAFLLECVAEIPGIERLRFTTSHPREMTQRVFDAYAKIPKLVSHLHLPVQSGSDRILAAMKRGYSVLEFKSVVRKLRAARPDLSLSSDFIVGFPGETEEDFEKTMKLIDEVGFDASFSFVYSPRPGTPASDLADPVPQETKLRWLARLQKRIDQQAQAISQAMVGRVERALVEGLSRKDATELAARTGNNRVVNFVGNPRLIGQFVDLTITAALPHSLRGEIVTTET.

An MTTase N-terminal domain is found at 2-119 (KKLYIRTFGC…LPQLIAERRH (118 aa)). 6 residues coordinate [4Fe-4S] cluster: Cys11, Cys48, Cys82, Cys156, Cys160, and Cys163. The 237-residue stretch at 142-378 (RVEGASAFVS…RIDQQAQAIS (237 aa)) folds into the Radical SAM core domain. In terms of domain architecture, TRAM spans 379-442 (QAMVGRVERA…PHSLRGEIVT (64 aa)).

It belongs to the methylthiotransferase family. MiaB subfamily. In terms of assembly, monomer. The cofactor is [4Fe-4S] cluster.

The protein resides in the cytoplasm. It catalyses the reaction N(6)-dimethylallyladenosine(37) in tRNA + (sulfur carrier)-SH + AH2 + 2 S-adenosyl-L-methionine = 2-methylsulfanyl-N(6)-dimethylallyladenosine(37) in tRNA + (sulfur carrier)-H + 5'-deoxyadenosine + L-methionine + A + S-adenosyl-L-homocysteine + 2 H(+). Catalyzes the methylthiolation of N6-(dimethylallyl)adenosine (i(6)A), leading to the formation of 2-methylthio-N6-(dimethylallyl)adenosine (ms(2)i(6)A) at position 37 in tRNAs that read codons beginning with uridine. The protein is tRNA-2-methylthio-N(6)-dimethylallyladenosine synthase of Aromatoleum aromaticum (strain DSM 19018 / LMG 30748 / EbN1) (Azoarcus sp. (strain EbN1)).